The sequence spans 298 residues: ATP synthase gamma chain (298 aa).

This sequence belongs to the ATPase gamma chain family. In terms of assembly, F-type ATPases have 2 components, CF(1) - the catalytic core - and CF(0) - the membrane proton channel. CF(1) has five subunits: alpha(3), beta(3), gamma(1), delta(1), epsilon(1). CF(0) has three main subunits: a, b and c.

It localises to the cell inner membrane. In terms of biological role, produces ATP from ADP in the presence of a proton gradient across the membrane. The gamma chain is believed to be important in regulating ATPase activity and the flow of protons through the CF(0) complex. The sequence is that of ATP synthase gamma chain from Bacteroides thetaiotaomicron (strain ATCC 29148 / DSM 2079 / JCM 5827 / CCUG 10774 / NCTC 10582 / VPI-5482 / E50).